The chain runs to 347 residues: Phosphoribosylformylglycinamidine cyclo-ligase (347 aa).

The protein belongs to the AIR synthase family.

The protein localises to the cytoplasm. It catalyses the reaction 2-formamido-N(1)-(5-O-phospho-beta-D-ribosyl)acetamidine + ATP = 5-amino-1-(5-phospho-beta-D-ribosyl)imidazole + ADP + phosphate + H(+). It participates in purine metabolism; IMP biosynthesis via de novo pathway; 5-amino-1-(5-phospho-D-ribosyl)imidazole from N(2)-formyl-N(1)-(5-phospho-D-ribosyl)glycinamide: step 2/2. The sequence is that of Phosphoribosylformylglycinamidine cyclo-ligase from Prochlorococcus marinus (strain AS9601).